We begin with the raw amino-acid sequence, 73 residues long: MSFKKLTNVWNVQEQLSLSNATYNKNLELEKRLAKIRNEIPNKSKLIATKVDVSTQTKTVKKFTKRGFKKVLI.

The stretch at 20-49 (NATYNKNLELEKRLAKIRNEIPNKSKLIAT) forms a coiled coil.

This is an uncharacterized protein from Acheta domesticus (House cricket).